We begin with the raw amino-acid sequence, 197 residues long: ATP-dependent Clp protease proteolytic subunit 1 (197 aa).

The Nucleophile role is filled by Ser99. The active site involves His124.

This sequence belongs to the peptidase S14 family. Fourteen ClpP subunits assemble into 2 heptameric rings which stack back to back to give a disk-like structure with a central cavity, resembling the structure of eukaryotic proteasomes.

Its subcellular location is the cytoplasm. The enzyme catalyses Hydrolysis of proteins to small peptides in the presence of ATP and magnesium. alpha-casein is the usual test substrate. In the absence of ATP, only oligopeptides shorter than five residues are hydrolyzed (such as succinyl-Leu-Tyr-|-NHMec, and Leu-Tyr-Leu-|-Tyr-Trp, in which cleavage of the -Tyr-|-Leu- and -Tyr-|-Trp bonds also occurs).. Functionally, cleaves peptides in various proteins in a process that requires ATP hydrolysis. Has a chymotrypsin-like activity. Plays a major role in the degradation of misfolded proteins. The sequence is that of ATP-dependent Clp protease proteolytic subunit 1 from Treponema denticola (strain ATCC 35405 / DSM 14222 / CIP 103919 / JCM 8153 / KCTC 15104).